The primary structure comprises 217 residues: Growth hormone variant (217 aa).

The first 26 residues, 1 to 26 (MAAGSRTSLLLAFGLLCLPWLQEGSA), serve as a signal peptide directing secretion. 2 disulfide bridges follow: Cys79/Cys191 and Cys208/Cys215. The residue at position 132 (Ser132) is a Phosphoserine. N-linked (GlcNAc...) asparagine glycosylation occurs at Asn166. Ser176 is subject to Phosphoserine.

It belongs to the somatotropin/prolactin family. In terms of tissue distribution, expressed in the placenta.

It localises to the secreted. Functionally, plays an important role in growth control. Its major role in stimulating body growth is to stimulate the liver and other tissues to secrete IGF1. It stimulates both the differentiation and proliferation of myoblasts. It also stimulates amino acid uptake and protein synthesis in muscle and other tissues. This is Growth hormone variant (GH2) from Pan troglodytes (Chimpanzee).